A 105-amino-acid chain; its full sequence is DNA-binding protein HU (105 aa).

The protein belongs to the bacterial histone-like protein family.

Functionally, histone-like DNA-binding protein which is capable of wrapping DNA to stabilize it, and thus to prevent its denaturation under extreme environmental conditions. This Treponema pallidum (strain Nichols) protein is DNA-binding protein HU (hup).